A 470-amino-acid polypeptide reads, in one-letter code: GTPase Der (470 aa).

EngA-type G domains lie at 2-165 (KTIA…GLEA) and 201-372 (IRVG…ENFS). Residues 8–15 (GKPNVGKS), 55–59 (DTGGI), 117–120 (NKID), 207–214 (GKVNVGKS), 254–258 (DTAGI), and 318–321 (NKWD) contribute to the GTP site. In terms of domain architecture, KH-like spans 373–457 (RRIPTSILNK…PILIRARKRG (85 aa)).

It belongs to the TRAFAC class TrmE-Era-EngA-EngB-Septin-like GTPase superfamily. EngA (Der) GTPase family. Associates with the 50S ribosomal subunit.

Its function is as follows. GTPase that plays an essential role in the late steps of ribosome biogenesis. The polypeptide is GTPase Der (Wolinella succinogenes (strain ATCC 29543 / DSM 1740 / CCUG 13145 / JCM 31913 / LMG 7466 / NCTC 11488 / FDC 602W) (Vibrio succinogenes)).